A 314-amino-acid polypeptide reads, in one-letter code: Cytochrome f (314 aa).

An N-terminal signal peptide occupies residues 1 to 30 (MATNKFFKSLLFTLTIAISSFGFCVENSSA). Residues Tyr-31, Cys-51, Cys-54, and His-55 each contribute to the heme site. Residues 280–300 (ILGYLAFCFCLLLTQVLLVLK) form a helical membrane-spanning segment.

This sequence belongs to the cytochrome f family. As to quaternary structure, the 4 large subunits of the cytochrome b6-f complex are cytochrome b6, subunit IV (17 kDa polypeptide, petD), cytochrome f and the Rieske protein, while the 4 small subunits are PetG, PetL, PetM and PetN. The complex functions as a dimer. It depends on heme as a cofactor.

Its subcellular location is the plastid. The protein resides in the chloroplast thylakoid membrane. Functionally, component of the cytochrome b6-f complex, which mediates electron transfer between photosystem II (PSII) and photosystem I (PSI), cyclic electron flow around PSI, and state transitions. This chain is Cytochrome f, found in Thalassiosira pseudonana (Marine diatom).